A 377-amino-acid chain; its full sequence is Opsin-2 (377 aa).

Over M1–A57 the chain is Extracellular. N3 is a glycosylation site (N-linked (GlcNAc...) asparagine). A helical transmembrane segment spans residues L58–F78. The Cytoplasmic segment spans residues S79–N89. A helical membrane pass occupies residues F90–I110. Over Y111 to Q126 the chain is Extracellular. A disulfide bond links C125 and C202. Residues I127–I146 traverse the membrane as a helical segment. Residues A147–K166 lie on the Cytoplasmic side of the membrane. The helical transmembrane segment at V167–L187 threads the bilayer. The Extracellular portion of the chain corresponds to K188–K214. The chain crosses the membrane as a helical span at residues L215 to F235. The Cytoplasmic portion of the chain corresponds to Y236–T283. The helical transmembrane segment at V284 to F304 threads the bilayer. Residues G305–V314 lie on the Extracellular side of the membrane. Residues T315 to I335 form a helical membrane-spanning segment. The Cytoplasmic segment spans residues R336–A377. Residues E355–A377 form a disordered region. The segment covering S361–A377 has biased composition (low complexity).

This sequence belongs to the G-protein coupled receptor 1 family. Opsin subfamily. In the retina, expression is essentially uniformly distributed, but a higher level is seen in the dorsal region of the retina and in the dorsal rim retinulae.

It is found in the membrane. Visual pigments are the light-absorbing molecules that mediate vision. They consist of an apoprotein, opsin, covalently linked to cis-retinal. May play a role in photoperiodic photoreception. The protein is Opsin-2 (OP2) of Manduca sexta (Tobacco hawkmoth).